Reading from the N-terminus, the 208-residue chain is Putative vomeronasal receptor-like protein 4 (208 aa).

Topologically, residues 1 to 19 (MEMTKLFSYIVIKNVYYPQ) are extracellular. A helical transmembrane segment spans residues 20–40 (VSFGISANTFLLLFHIFTFAY). Residues 41-48 (THRLKPID) lie on the Cytoplasmic side of the membrane. Residues 49–69 (MTISHLPLIHILLLFTQAILV) traverse the membrane as a helical segment. Topologically, residues 70-97 (SSDLFESWNIQNNDLKCKIITFLNRVMR) are extracellular. A disulfide bridge connects residues Cys-86 and Cys-173. The helical transmembrane segment at 98–118 (GVSICTTCLLSVLQAITISPS) threads the bilayer. Over 119–135 (TSFLEKFKHISANHTLG) the chain is Cytoplasmic. A helical membrane pass occupies residues 136 to 156 (FILFSWVLNMFITNNLLLFIV). The Extracellular segment spans residues 157–183 (PTPNRIGASLLFVTEHCYVLPMSYTHR). The chain crosses the membrane as a helical span at residues 184-204 (SLFFILMVLRDVIFIGLMVLS). Residues 205–208 (SGYG) lie on the Cytoplasmic side of the membrane.

The protein belongs to the G-protein coupled receptor 1 family. In terms of tissue distribution, expressed in olfactory nerve.

Its subcellular location is the cell membrane. Functionally, putative pheromone receptor. This Homo sapiens (Human) protein is Putative vomeronasal receptor-like protein 4 (VN1R17P).